The chain runs to 151 residues: Nucleoside diphosphate kinase (151 aa).

Residues lysine 10, phenylalanine 58, arginine 86, threonine 92, arginine 103, and asparagine 113 each contribute to the ATP site. The active-site Pros-phosphohistidine intermediate is histidine 116.

It belongs to the NDK family. Homotetramer. The cofactor is Mg(2+).

It localises to the cytoplasm. The catalysed reaction is dZDP + ATP = dZTP + ADP. It catalyses the reaction a 2'-deoxyribonucleoside 5'-diphosphate + ATP = a 2'-deoxyribonucleoside 5'-triphosphate + ADP. It carries out the reaction a ribonucleoside 5'-diphosphate + ATP = a ribonucleoside 5'-triphosphate + ADP. Its pathway is purine metabolism. Functionally, major role in the synthesis of nucleoside triphosphates other than ATP. The ATP gamma phosphate is transferred to the NDP beta phosphate via a ping-pong mechanism, using a phosphorylated active-site intermediate. (Microbial infection) Catalyzes the phosphorylation of dZDP to dZTP, when the bacterium is infected by a phage that produces the substrate for the synthesis of dZTP (2- amino-2'-deoxyadenosine 5'-triphosphate), which is then used by the phage as a DNA polymerase substrate. In Synechococcus sp. (strain CC9902), this protein is Nucleoside diphosphate kinase.